We begin with the raw amino-acid sequence, 242 residues long: Synaptonemal complex central element protein 1-like (242 aa).

The interval 1-24 is disordered; it reads MAGKLKPLNVEAPEATEEAEGQAK. Residues 44–181 adopt a coiled-coil conformation; the sequence is LEPQIEDLIS…LREVERRLHS (138 aa). Residues 206–242 are disordered; sequence VRSAPEVGAGEGEAGPELPRARDEEDPEPPVAAPDAL.

This sequence belongs to the SYCE family.

Its function is as follows. May be involved in meiosis. This chain is Synaptonemal complex central element protein 1-like (SYCE1L), found in Homo sapiens (Human).